The following is a 178-amino-acid chain: ATP-dependent protease subunit HslV (178 aa).

The active site involves Thr7. Residues Gly162, Cys165, and Thr168 each contribute to the Na(+) site.

Belongs to the peptidase T1B family. HslV subfamily. In terms of assembly, a double ring-shaped homohexamer of HslV is capped on each side by a ring-shaped HslU homohexamer. The assembly of the HslU/HslV complex is dependent on binding of ATP.

Its subcellular location is the cytoplasm. The enzyme catalyses ATP-dependent cleavage of peptide bonds with broad specificity.. Its activity is regulated as follows. Allosterically activated by HslU binding. Functionally, protease subunit of a proteasome-like degradation complex believed to be a general protein degrading machinery. This chain is ATP-dependent protease subunit HslV, found in Leptothrix cholodnii (strain ATCC 51168 / LMG 8142 / SP-6) (Leptothrix discophora (strain SP-6)).